Reading from the N-terminus, the 730-residue chain is Elongation factor 2 (730 aa).

The 210-residue stretch at 19–228 folds into the tr-type G domain; that stretch reads TKIRNIGIVA…TGVSFKDVYD (210 aa). GTP-binding positions include 28 to 35, 94 to 98, and 148 to 151; these read AHIDHGKT, DTPGH, and NKVD. The residue at position 596 (H596) is a Diphthamide.

The protein belongs to the TRAFAC class translation factor GTPase superfamily. Classic translation factor GTPase family. EF-G/EF-2 subfamily.

It is found in the cytoplasm. Functionally, catalyzes the GTP-dependent ribosomal translocation step during translation elongation. During this step, the ribosome changes from the pre-translocational (PRE) to the post-translocational (POST) state as the newly formed A-site-bound peptidyl-tRNA and P-site-bound deacylated tRNA move to the P and E sites, respectively. Catalyzes the coordinated movement of the two tRNA molecules, the mRNA and conformational changes in the ribosome. This is Elongation factor 2 from Methanosarcina barkeri (strain Fusaro / DSM 804).